The primary structure comprises 279 residues: Energy-coupling factor transporter ATP-binding protein EcfA1 (279 aa).

Residues 6–240 enclose the ABC transporter domain; the sequence is VEFRNVSFRY…KDALREIGLD (235 aa). Residue 40–47 coordinates ATP; it reads GHNGSGKS.

This sequence belongs to the ABC transporter superfamily. Energy-coupling factor EcfA family. As to quaternary structure, forms a stable energy-coupling factor (ECF) transporter complex composed of 2 membrane-embedded substrate-binding proteins (S component), 2 ATP-binding proteins (A component) and 2 transmembrane proteins (T component).

The protein localises to the cell membrane. In terms of biological role, ATP-binding (A) component of a common energy-coupling factor (ECF) ABC-transporter complex. Unlike classic ABC transporters this ECF transporter provides the energy necessary to transport a number of different substrates. This is Energy-coupling factor transporter ATP-binding protein EcfA1 from Oceanobacillus iheyensis (strain DSM 14371 / CIP 107618 / JCM 11309 / KCTC 3954 / HTE831).